The sequence spans 526 residues: MLDVRPDEVSAVLRQQLSNSLTEAQLEEVGTVLQVGDGVARIYGLTKAQAGELLEFEGGLKGMVLNLEEDNVGAVLLGEYSAIKEGSTVKRTKQIAFVNVGEGMVGRVVDTLGNPIDGKGPITGELYKMPMERKAPGVIYRQPVTEPLQTGIKAIDAMIPIGRGQRELIIGDRQTGKTTVALDAIINQKEFYDRGEPVFCIYVACGQKASTIAGIVGTLEKHGAMAYTVVVAATASDPAPMQYFAPFTGAAVGEYFRDTGRPALVVYDDLSKQAVAYREVSLLLRRPPGREAYPGDVFYLHSRLLERAAKINKSDEIAAAMNDLPESLKGIVKGGGSLTALPIIETQAGDVSAYIPTNVISITDGQIFLEINLFNSGVRPAINVGISVSRVGGNAQIKSMKKVAGTLKLDQAQFRELEAFAKFGSDLDASTKLTIERGRRNLEILKQPAFSPVSVEEQVATIYVSTNGFMDSVVVNKVRDFEKDFLTVLRTSHKDTLKEIKSGKIDDAITEVLKKVAKEVAVKYSK.

171–178 (GDRQTGKT) is an ATP binding site.

This sequence belongs to the ATPase alpha/beta chains family. In terms of assembly, F-type ATPases have 2 components, CF(1) - the catalytic core - and CF(0) - the membrane proton channel. CF(1) has five subunits: alpha(3), beta(3), gamma(1), delta(1), epsilon(1). CF(0) has three main subunits: a(1), b(2) and c(9-12). The alpha and beta chains form an alternating ring which encloses part of the gamma chain. CF(1) is attached to CF(0) by a central stalk formed by the gamma and epsilon chains, while a peripheral stalk is formed by the delta and b chains.

The protein localises to the cell inner membrane. The catalysed reaction is ATP + H2O + 4 H(+)(in) = ADP + phosphate + 5 H(+)(out). Functionally, produces ATP from ADP in the presence of a proton gradient across the membrane. The alpha chain is a regulatory subunit. The chain is ATP synthase subunit alpha from Cytophaga hutchinsonii (strain ATCC 33406 / DSM 1761 / CIP 103989 / NBRC 15051 / NCIMB 9469 / D465).